A 702-amino-acid chain; its full sequence is Glucosidase 2 subunit beta (702 aa).

The signal sequence occupies residues 1–20; the sequence is MVSMFSLFLLLIEQSPLVAS. Residue N145 is glycosylated (N-linked (GlcNAc...) asparagine). Residues 163 to 228 are a coiled coil; that stretch reads SYREGKEALE…LRGEYFNQLS (66 aa). 2 N-linked (GlcNAc...) asparagine glycosylation sites follow: N240 and N358. The segment at 435–457 is disordered; it reads PKVLPPDAVESEQDTNSDHIGTS. Residues 478-517 are a coiled coil; sequence KDLVSLEKRFRSCESQVSLLENELKQKMDYKKLLDETEDE. Residues N520 and N525 are each glycosylated (N-linked (GlcNAc...) asparagine). One can recognise an MRH domain in the interval 537 to 689; sequence SYCLDDILDN…DVVGPLGCNK (153 aa). Cystine bridges form between C539-C552, C646-C675, and C660-C687. N688 and N699 each carry an N-linked (GlcNAc...) asparagine glycan.

In terms of assembly, heterodimer of a catalytic subunit alpha (ROT2) and a subunit beta (GTB1).

Its subcellular location is the endoplasmic reticulum. In terms of biological role, subunit of glucosidase 2, which cleaves sequentially the 2 innermost alpha-1,3-linked glucose residues from the Glc(2)Man(9)GlcNAc(2) oligosaccharide precursor of immature glycoproteins. Specifically required for the cleavage of the final glucose. The chain is Glucosidase 2 subunit beta (GTB1) from Saccharomyces cerevisiae (strain ATCC 204508 / S288c) (Baker's yeast).